Here is a 145-residue protein sequence, read N- to C-terminus: Actin-related protein 4A (145 aa).

The segment at 47 to 66 is disordered; the sequence is IDDAANTTEDAKESDKEKGK. The segment covering 55-64 has biased composition (basic and acidic residues); that stretch reads EDAKESDKEK.

This sequence belongs to the actin family. ARP4 subfamily. As to expression, expressed in roots, leaves and flowers.

The chain is Actin-related protein 4A (ARP4A) from Arabidopsis thaliana (Mouse-ear cress).